The sequence spans 230 residues: ATP synthase subunit a (230 aa).

A run of 6 helical transmembrane segments spans residues 26 to 46 (ANAV…SLIA), 83 to 103 (FFPL…VGLI), 112 to 132 (NVNT…VVGI), 143 to 163 (FMGP…IGHL), 182 to 202 (LVLM…MMLM), and 203 to 223 (GVLV…IYIQ).

It belongs to the ATPase A chain family. As to quaternary structure, F-type ATPases have 2 components, CF(1) - the catalytic core - and CF(0) - the membrane proton channel. CF(1) has five subunits: alpha(3), beta(3), gamma(1), delta(1), epsilon(1). CF(0) has three main subunits: a(1), b(2) and c(9-12). The alpha and beta chains form an alternating ring which encloses part of the gamma chain. CF(1) is attached to CF(0) by a central stalk formed by the gamma and epsilon chains, while a peripheral stalk is formed by the delta and b chains.

It localises to the cell inner membrane. Key component of the proton channel; it plays a direct role in the translocation of protons across the membrane. This Trichlorobacter lovleyi (strain ATCC BAA-1151 / DSM 17278 / SZ) (Geobacter lovleyi) protein is ATP synthase subunit a.